The following is a 231-amino-acid chain: MEVKKLEFIGPRVMPGGQKEMDYFCQVPEFQQRCQSGNAVVIPRRDQVADGRGSTGKLFSQTLNTADTIPHCIVMFEDTYTAQSSTQPWLPISTCSVFYQLGEGVCGFGNICHGGIQTTLLDDVMGVLGVLNARLQDGIIPSKVPGAYWPRNNPGMVDLTKSLFATQGIEVKFLRPLRTPQVIEVSAQLVDMDVSGGSFTVQCVIRDMKGKQYAVANANWVIHTPRPRSRL.

It participates in secondary metabolite biosynthesis. Functionally, part of the gene cluster that mediates the biosynthesis of verlamelin, a lipopeptide that exhibits antifungal activity against plant pathogenic fungi. Verlamelin is a cyclic hexadepsipeptide and is bridged by ester bonding between a 5-hydroxytetradecanoic acid moiety and a carboxyl group on the terminal Val of amide-bonded tetradecanoyl-hexapeptide D-allo-Thr-D-Ala-L-Pro-L-Gln-D-Tyr-L-Val. VlmA and vlmB are altogether regarded as essential components in the biosynthesis of 5-hydroxytetradecanoic acid. VlmA catalyzes the hydroxylation at position C5 of tetradecanoic acid produced in primary metabolism, while the precise function of vlmB still remains to be solved. To be loaded onto the waiting NRPS, 5-hydroxytetradecanoic acid is activated in the form of acyladenylate by the AMP-dependent ligase vlmC. VlmS seems to accept the fatty-acyl intermediate onto the initial module to further elongate amino acid residues by the downstream modules. In addition, in the last module at its C-terminus, vlmS contains a surplus condensation (C) domain that may be involved in cyclization, the last step to form verlamelin. The protein is Verlamelin biosynthesis protein B of Lecanicillium sp.